A 299-amino-acid chain; its full sequence is ATP phosphoribosyltransferase (299 aa).

This sequence belongs to the ATP phosphoribosyltransferase family. Long subfamily. It depends on Mg(2+) as a cofactor.

The protein resides in the cytoplasm. The enzyme catalyses 1-(5-phospho-beta-D-ribosyl)-ATP + diphosphate = 5-phospho-alpha-D-ribose 1-diphosphate + ATP. Its pathway is amino-acid biosynthesis; L-histidine biosynthesis; L-histidine from 5-phospho-alpha-D-ribose 1-diphosphate: step 1/9. With respect to regulation, feedback inhibited by histidine. Catalyzes the condensation of ATP and 5-phosphoribose 1-diphosphate to form N'-(5'-phosphoribosyl)-ATP (PR-ATP). Has a crucial role in the pathway because the rate of histidine biosynthesis seems to be controlled primarily by regulation of HisG enzymatic activity. The polypeptide is ATP phosphoribosyltransferase (Campylobacter jejuni subsp. jejuni serotype O:6 (strain 81116 / NCTC 11828)).